The sequence spans 196 residues: Imidazoleglycerol-phosphate dehydratase (196 aa).

It belongs to the imidazoleglycerol-phosphate dehydratase family.

The protein localises to the cytoplasm. It carries out the reaction D-erythro-1-(imidazol-4-yl)glycerol 3-phosphate = 3-(imidazol-4-yl)-2-oxopropyl phosphate + H2O. The protein operates within amino-acid biosynthesis; L-histidine biosynthesis; L-histidine from 5-phospho-alpha-D-ribose 1-diphosphate: step 6/9. The polypeptide is Imidazoleglycerol-phosphate dehydratase (Moorella thermoacetica (strain ATCC 39073 / JCM 9320)).